A 191-amino-acid chain; its full sequence is Protein LURP-one-related 6 (191 aa).

This sequence belongs to the LOR family.

In terms of biological role, might be related to the phospholipid scramblase and tubby-like superfamily of membrane tethered transcription factors. The chain is Protein LURP-one-related 6 from Arabidopsis thaliana (Mouse-ear cress).